Reading from the N-terminus, the 328-residue chain is Mitochondrial thiamine pyrophosphate carrier 1 (328 aa).

Solcar repeat units follow at residues 12–110, 120–208, and 221–316; these read GTRR…TTQL, PQPI…LRPV, and PPGS…ALKL. The next 6 membrane-spanning stretches (helical) occupy residues 17–37, 79–99, 126–146, 185–205, 227–247, and 291–308; these read VVLA…PLDV, LTGL…YGGI, FISG…LDLL, SAAV…YEAL, AAAG…LDLV, and GLTV…VTMW.

The protein belongs to the mitochondrial carrier (TC 2.A.29) family.

It localises to the mitochondrion inner membrane. Mitochondrial transporter that mediates uptake of thiamine pyrophosphate (ThPP) into mitochondria. The chain is Mitochondrial thiamine pyrophosphate carrier 1 (tpc1) from Emericella nidulans (strain FGSC A4 / ATCC 38163 / CBS 112.46 / NRRL 194 / M139) (Aspergillus nidulans).